The primary structure comprises 326 residues: Protein MICROTUBULE BINDING PROTEIN 2C (326 aa).

Composition is skewed to polar residues over residues 1-15 and 34-46; these read MYEQ…QSDS and PHQS…SGNE. Disordered regions lie at residues 1–46 and 71–132; these read MYEQ…SGNE and ERSS…KALA. The stretch at 132-183 forms a coiled coil; it reads AGAEKEEMSRLREQVNDLQTKLSEKEEVLKSMEMSKNQVNEIQEKLEATNRL.

This sequence belongs to the microtubule binding protein 2C family. In terms of assembly, interacts with STM. In terms of tissue distribution, expressed in seedlings, roots, flowers and developing ovules.

The protein resides in the cytoplasm. Its subcellular location is the cytoskeleton. Its function is as follows. Prevents homeodomain proteins (e.g. STM) association to plasmodesmata and, consequently, cell-to-cell transport. Binds to RNA. Alters STM RNA binding capacity. Regulates cytoskeleton (e.g. actin) organization that determinates cell shape. Regulates stomata patterning and drought tolerance. Involved in restricting tobamovirus (e.g. oilseed rape mosaic virus) infectivity, probably by interfering with cell-to-cell virus movement. The polypeptide is Protein MICROTUBULE BINDING PROTEIN 2C (Arabidopsis thaliana (Mouse-ear cress)).